The following is a 303-amino-acid chain: Pantothenate synthetase (303 aa).

Positions 1-21 are disordered; it reads MIATGHGGAERRTTAGDGTAR. Position 48 to 55 (48 to 55) interacts with ATP; that stretch reads MGALHDGH. The active-site Proton donor is histidine 55. Residue glutamine 79 coordinates (R)-pantoate. Beta-alanine is bound at residue glutamine 79. Position 165-168 (165-168) interacts with ATP; that stretch reads GRKD. Residue glutamine 171 coordinates (R)-pantoate. ATP is bound at residue 202-205; the sequence is ASSR.

It belongs to the pantothenate synthetase family. As to quaternary structure, homodimer.

Its subcellular location is the cytoplasm. The catalysed reaction is (R)-pantoate + beta-alanine + ATP = (R)-pantothenate + AMP + diphosphate + H(+). The protein operates within cofactor biosynthesis; (R)-pantothenate biosynthesis; (R)-pantothenate from (R)-pantoate and beta-alanine: step 1/1. In terms of biological role, catalyzes the condensation of pantoate with beta-alanine in an ATP-dependent reaction via a pantoyl-adenylate intermediate. This chain is Pantothenate synthetase, found in Acidothermus cellulolyticus (strain ATCC 43068 / DSM 8971 / 11B).